Reading from the N-terminus, the 559-residue chain is Tissue-type plasminogen activator (559 aa).

The first 17 residues, 1–17 (MKGELLCVLLLCGVAFT), serve as a signal peptide directing secretion. Residues 18–29 (LPDQGIHRRFRR) constitute a propeptide that is removed on maturation. A propeptide spans 30–32 (GAR) (removed by plasmin). In terms of domain architecture, Fibronectin type-I spans 36–78 (ATCRDEQTQTTYQQHQSWLRPMLRGNRVEYCRCNSGLAQCHSV). Disulfide bonds link cysteine 38-cysteine 68, cysteine 66-cysteine 75, cysteine 83-cysteine 94, cysteine 88-cysteine 105, cysteine 107-cysteine 116, cysteine 124-cysteine 205, cysteine 145-cysteine 187, cysteine 176-cysteine 200, cysteine 213-cysteine 294, cysteine 234-cysteine 276, cysteine 265-cysteine 289, cysteine 297-cysteine 428, cysteine 340-cysteine 356, cysteine 348-cysteine 417, cysteine 442-cysteine 516, cysteine 474-cysteine 490, and cysteine 506-cysteine 534. The tract at residues 39-49 (RDEQTQTTYQQ) is important for binding to annexin A2. Positions 79–117 (PVRSCSEPRCFNGGTCQQALYFSDFVCQCPDGFVGKRCD) constitute an EGF-like domain. 2 consecutive Kringle domains span residues 124-205 (CFEG…TPAC) and 213-294 (CYVG…MSPC). Residue asparagine 149 is glycosylated (N-linked (GlcNAc...) asparagine). The 250-residue stretch at 309 to 558 (IKGGLFTDIT…YLNWIQDNMK (250 aa)) folds into the Peptidase S1 domain. Active-site charge relay system residues include histidine 355 and aspartate 404. N-linked (GlcNAc...) asparagine glycosylation occurs at asparagine 481. Serine 510 (charge relay system) is an active-site residue.

This sequence belongs to the peptidase S1 family. Heterodimer of chain A and chain B held by a disulfide bond. Binds to fibrin with high affinity. This interaction leads to an increase in the catalytic efficiency of the enzyme due to an increase in affinity for plasminogen. Similarly, binding to heparin increases the activation of plasminogen. Binds to annexin A2, cytokeratin-8, fibronectin and laminin. Binds to mannose receptor and the low-density lipoprotein receptor-related protein (LRP1); these proteins are involved in TPA clearance. Binds LRP1B; binding is followed by internalization and degradation. Forms heterodimer with SERPINA5. Interacts with SERPINE1. In complex with SERPINE1, interacts with SORL1. In terms of processing, the single chain, almost fully active enzyme, can be further processed into a two-chain fully active form by a cleavage after Arg-308 catalyzed by plasmin, tissue kallikrein or factor Xa.

The protein localises to the secreted. It localises to the extracellular space. The catalysed reaction is Specific cleavage of Arg-|-Val bond in plasminogen to form plasmin.. With respect to regulation, inhibited by SERPINA5. Inhibited by SERPINE1. Its function is as follows. Converts the abundant, but inactive, zymogen plasminogen to plasmin by hydrolyzing a single Arg-Val bond in plasminogen. By controlling plasmin-mediated proteolysis, it plays an important role in tissue remodeling and degradation, in cell migration and many other physiopathological events. During oocyte activation, plays a role in cortical granule reaction in the zona reaction, which contributes to the block to polyspermy. The sequence is that of Tissue-type plasminogen activator (Plat) from Rattus norvegicus (Rat).